The chain runs to 135 residues: Interleukin-4 (135 aa).

An N-terminal signal peptide occupies residues 1-24; the sequence is MGLTSQLIPVLVCLLVCTSHFVHG. Intrachain disulfides connect Cys-27-Cys-135, Cys-48-Cys-85, and Cys-70-Cys-105. Asn-62 carries N-linked (GlcNAc...) asparagine glycosylation.

Belongs to the IL-4/IL-13 family.

It localises to the secreted. Participates in at least several B-cell activation processes as well as of other cell types. It is a costimulator of DNA-synthesis. It induces the expression of class II MHC molecules on resting B-cells. It enhances both secretion and cell surface expression of IgE and IgG1. It also regulates the expression of the low affinity Fc receptor for IgE (CD23) on both lymphocytes and monocytes. Positively regulates IL31RA expression in macrophages. Stimulates autophagy in dendritic cells by interfering with mTORC1 signaling and through the induction of RUFY4. This chain is Interleukin-4 (IL4), found in Bos taurus (Bovine).